A 201-amino-acid polypeptide reads, in one-letter code: Cobalt-precorrin-7 C(5)-methyltransferase (201 aa).

The protein belongs to the precorrin methyltransferase family.

The enzyme catalyses Co-precorrin-7 + S-adenosyl-L-methionine = Co-precorrin-8X + S-adenosyl-L-homocysteine + H(+). It functions in the pathway cofactor biosynthesis; adenosylcobalamin biosynthesis; cob(II)yrinate a,c-diamide from sirohydrochlorin (anaerobic route): step 8/10. Functionally, catalyzes the methylation of C-5 in cobalt-precorrin-7 to form cobalt-precorrin-8. The chain is Cobalt-precorrin-7 C(5)-methyltransferase (cbiE) from Salmonella typhi.